The sequence spans 608 residues: 1-deoxy-D-xylulose-5-phosphate synthase (608 aa).

Residues histidine 80 and glycine 121–serine 123 contribute to the thiamine diphosphate site. Aspartate 152 serves as a coordination point for Mg(2+). Residues glycine 153 to alanine 154, asparagine 181, tyrosine 282, and glutamate 357 each bind thiamine diphosphate. Residue asparagine 181 participates in Mg(2+) binding.

It belongs to the transketolase family. DXPS subfamily. As to quaternary structure, homodimer. Mg(2+) is required as a cofactor. The cofactor is thiamine diphosphate.

It carries out the reaction D-glyceraldehyde 3-phosphate + pyruvate + H(+) = 1-deoxy-D-xylulose 5-phosphate + CO2. Its pathway is metabolic intermediate biosynthesis; 1-deoxy-D-xylulose 5-phosphate biosynthesis; 1-deoxy-D-xylulose 5-phosphate from D-glyceraldehyde 3-phosphate and pyruvate: step 1/1. Its function is as follows. Catalyzes the acyloin condensation reaction between C atoms 2 and 3 of pyruvate and glyceraldehyde 3-phosphate to yield 1-deoxy-D-xylulose-5-phosphate (DXP). The protein is 1-deoxy-D-xylulose-5-phosphate synthase of Buchnera aphidicola subsp. Acyrthosiphon pisum (strain 5A).